The sequence spans 229 residues: MLTLNNISKSYKLGKEEVPILKHINLTVQAGEFLAIMGPSGSGKSTLMNIIGCLDRPTSGTYTLDQIDILKGKDGALAEIRNESIGFVFQTFHLLPRLTALQNVELPMIYNKVKKKERRQRAYEALEKVGLKDRVSYKPPKLSGGQKQRVAIARALVNQPRFILADEPTGALDTKSSEQILALFSELHREGKTIIMITHDPDVAKKADRTVFIRDGELVLDERGDISHA.

The ABC transporter domain maps to 2–229 (LTLNNISKSY…LDERGDISHA (228 aa)). ATP is bound at residue 38–45 (GPSGSGKS).

Belongs to the ABC transporter superfamily.

This is an uncharacterized protein from Bacillus subtilis (strain 168).